Here is a 932-residue protein sequence, read N- to C-terminus: Protocadherin gamma-A12 (932 aa).

An N-terminal signal peptide occupies residues 1-29 (MIPARLHRDYKGLVLLGILLGTLWETGCT). 6 Cadherin domains span residues 30–133 (QIRY…APYF), 134–242 (RESE…APAF), 243–347 (AQPE…APEV), 348–452 (VLTS…PPVF), 453–562 (PQAS…APEI), and 570–683 (DGST…SPAN). Residues 30 to 692 (QIRYSVPEEL…NSETSDLTLY (663 aa)) are Extracellular-facing. Residues Asn-265, Asn-419, and Asn-545 are each glycosylated (N-linked (GlcNAc...) asparagine). A helical membrane pass occupies residues 693–713 (LVVAVAAVSCVFLAFVILLLA). The Cytoplasmic segment spans residues 714-932 (LRLRRWHKSR…KKKSGKKEKK (219 aa)). 2 disordered regions span residues 803-841 (SHGL…WPNN) and 902-932 (ATLT…KEKK). A compositionally biased stretch (polar residues) spans 816-841 (WRFSQAQRPGTSGSQNGDDTGTWPNN). The span at 922–932 (NKKKSGKKEKK) shows a compositional bias: basic residues.

Its subcellular location is the cell membrane. Its function is as follows. Potential calcium-dependent cell-adhesion protein. May be involved in the establishment and maintenance of specific neuronal connections in the brain. This chain is Protocadherin gamma-A12 (PCDHGA12), found in Homo sapiens (Human).